Consider the following 734-residue polypeptide: Photosystem I P700 chlorophyll a apoprotein A2 (734 aa).

8 helical membrane-spanning segments follow: residues 46-69 (IFASHFGQLAVIFLWTSGNLFHVA), 135-158 (LYTGALFLLAVSAVALVAGWLHLQ), 175-199 (LNHHLSGLFGVSSLAWTGHLVHVAI), 273-291 (IAHHHLAIAVLFIVAGHMY), 330-353 (LHFQLGLALASLGVITSLVAQHMY), 369-395 (AALYTHHQYIAGFIMTGAFAHGAIFFI), 417-439 (AIISHLSWASLFLGFHTLGLYVH), and 517-535 (FLVHHAIALGLHTTTLILV). Residues Cys-559 and Cys-568 each coordinate [4Fe-4S] cluster. The next 2 helical transmembrane spans lie at 575–596 (AFYLAVFWMLNTIGWVTFYWHW) and 643–665 (LSVWAWMFLFGHLVWATGFMFLI). The chlorophyll a site is built by His-654, Met-662, and Tyr-670. Phylloquinone is bound at residue Trp-671. A helical transmembrane segment spans residues 707–727 (LVGLAHFSVGYIFTYAAFLIA).

Belongs to the PsaA/PsaB family. The PsaA/B heterodimer binds the P700 chlorophyll special pair and subsequent electron acceptors. PSI consists of a core antenna complex that captures photons, and an electron transfer chain that converts photonic excitation into a charge separation. The eukaryotic PSI reaction center is composed of at least 11 subunits. P700 is a chlorophyll a/chlorophyll a' dimer, A0 is one or more chlorophyll a, A1 is one or both phylloquinones and FX is a shared 4Fe-4S iron-sulfur center. is required as a cofactor.

The protein localises to the plastid. Its subcellular location is the chloroplast thylakoid membrane. It catalyses the reaction reduced [plastocyanin] + hnu + oxidized [2Fe-2S]-[ferredoxin] = oxidized [plastocyanin] + reduced [2Fe-2S]-[ferredoxin]. In terms of biological role, psaA and PsaB bind P700, the primary electron donor of photosystem I (PSI), as well as the electron acceptors A0, A1 and FX. PSI is a plastocyanin-ferredoxin oxidoreductase, converting photonic excitation into a charge separation, which transfers an electron from the donor P700 chlorophyll pair to the spectroscopically characterized acceptors A0, A1, FX, FA and FB in turn. Oxidized P700 is reduced on the lumenal side of the thylakoid membrane by plastocyanin. The chain is Photosystem I P700 chlorophyll a apoprotein A2 from Zygnema circumcarinatum (Green alga).